The following is a 679-amino-acid chain: MADKPNTMTVEQAADEAAALRQTLNEWRRQYYDEDAPNVEDSVYDQKYERLVELEQTFPQLVTPDSPTQLVGGTVKAGFDKVTHEIPMLSLGDVFSQAELQEFVDRLEQNVGHPVDYNCELKIDGLALSLRYEDGVLVQGSTRGNGTVGEDITANIKTIKSIPQRLTRPLTIDVRGECYMPKAAFAALNERREAAGEPVFANPRNAAAGTLRQLDSRVVAERQLSTFMYNIADYEPLTARTQSDMLTEFADLGFAINPDFKVAHSMADVFSYIDHYQNERPELAYGIDGIVIKANPLPLQRSLGATVKVPRWAIAFKFPPDEQPTLLKDVEWTVGRTGVVTPTAVMEPVQLAGTTVARASLHNPDYVAAKDVRIGDTVLLHKAGDIIPEISSVDLAKRPKDAQPLVIPTTCPSCGAPLVHLEDEVALRCINPKCPAQVQEGLVHFASRNAMNIDGLGPRIIAQLYANRLVSDVAGLYRLTKAQLLTLDKIKDKSAEKLLTAIDRSRDNSLERLLFGLGIRHVGAKVARLIAQHFGTIEALMAASQEEIAAIDSMGDVIANAVVQYFESDEVHTLIRELQAVNVNTTYQGPSATVAEDSNSWFAGKRVVLTGKLESFTRPDATQWLQAHGATVMGSVSKKTDLVIAGSDAGSKLQKAQQLDITVWDEARFSETMREDAQA.

Residues 41 to 45, 90 to 91, and Glu-120 each bind NAD(+); these read DSVYD and SL. The active-site N6-AMP-lysine intermediate is Lys-122. 4 residues coordinate NAD(+): Arg-143, Glu-177, Lys-293, and Lys-317. Cys-411, Cys-414, Cys-429, and Cys-434 together coordinate Zn(2+). The BRCT domain maps to 597–679; sequence DSNSWFAGKR…SETMREDAQA (83 aa).

Belongs to the NAD-dependent DNA ligase family. LigA subfamily. Mg(2+) serves as cofactor. Requires Mn(2+) as cofactor.

The catalysed reaction is NAD(+) + (deoxyribonucleotide)n-3'-hydroxyl + 5'-phospho-(deoxyribonucleotide)m = (deoxyribonucleotide)n+m + AMP + beta-nicotinamide D-nucleotide.. Functionally, DNA ligase that catalyzes the formation of phosphodiester linkages between 5'-phosphoryl and 3'-hydroxyl groups in double-stranded DNA using NAD as a coenzyme and as the energy source for the reaction. It is essential for DNA replication and repair of damaged DNA. The sequence is that of DNA ligase from Lactiplantibacillus plantarum (strain ATCC BAA-793 / NCIMB 8826 / WCFS1) (Lactobacillus plantarum).